The following is a 293-amino-acid chain: Bifunctional protein FolD (293 aa).

NADP(+) contacts are provided by residues 165 to 167 (GRS), Ser-190, and Ile-231.

This sequence belongs to the tetrahydrofolate dehydrogenase/cyclohydrolase family. In terms of assembly, homodimer.

It catalyses the reaction (6R)-5,10-methylene-5,6,7,8-tetrahydrofolate + NADP(+) = (6R)-5,10-methenyltetrahydrofolate + NADPH. It carries out the reaction (6R)-5,10-methenyltetrahydrofolate + H2O = (6R)-10-formyltetrahydrofolate + H(+). Its pathway is one-carbon metabolism; tetrahydrofolate interconversion. Its function is as follows. Catalyzes the oxidation of 5,10-methylenetetrahydrofolate to 5,10-methenyltetrahydrofolate and then the hydrolysis of 5,10-methenyltetrahydrofolate to 10-formyltetrahydrofolate. In Synechococcus sp. (strain CC9902), this protein is Bifunctional protein FolD.